The primary structure comprises 524 residues: RNA-splicing ligase RtcB homolog 2 (524 aa).

Positions 141, 144, 249, 281, and 372 each coordinate Mn(2+). Residue 248 to 252 (NHYLE) participates in GMP binding. Residues 372 to 373 (HN), 421 to 424 (GGSM), serine 428, 447 to 450 (HGAG), and lysine 523 contribute to the GMP site. The GMP-histidine intermediate role is filled by histidine 447.

This sequence belongs to the RtcB family. As to quaternary structure, catalytic component of the tRNA-splicing ligase complex. Requires Mn(2+) as cofactor.

The enzyme catalyses a 3'-end 3'-phospho-ribonucleotide-RNA + a 5'-end dephospho-ribonucleoside-RNA + GTP = a ribonucleotidyl-ribonucleotide-RNA + GMP + diphosphate. It carries out the reaction a 3'-end 2',3'-cyclophospho-ribonucleotide-RNA + a 5'-end dephospho-ribonucleoside-RNA + GTP + H2O = a ribonucleotidyl-ribonucleotide-RNA + GMP + diphosphate + H(+). Catalytic subunit of the tRNA-splicing ligase complex that acts by directly joining spliced tRNA halves to mature-sized tRNAs by incorporating the precursor-derived splice junction phosphate into the mature tRNA as a canonical 3',5'-phosphodiester. May act as an RNA ligase with broad substrate specificity, and may function toward other RNAs. This chain is RNA-splicing ligase RtcB homolog 2, found in Entamoeba dispar (strain ATCC PRA-260 / SAW760).